The chain runs to 552 residues: MAAFIKDSFWGQIIYRLSGRKLFRHNDELPDYVVPEKYLLDPKEEVLNSSDKSQSSENKEQTEGDQATIQNEPASEHIIVTWDGDDDPENPYNWPFAWKAIAAMQIGFLTVSVYMASAIYTPGVEEIMNQFNINSTLATLPLTMFVIGYGIGPLFWSPLSENSRIGRTPLYIITLFIFFILQIPTALSNHIAGLSVLRVIAGFFAAPALSTGGASYGDFIAMHYYSIALGVWSIFAVAGPSIGPLIGAAVINRSHDADGWRWSFWFMAILSGVCFIVLSFSLPETYGKTLLRRKAERLRKLTGNNRIISEGELEDGHKTTSQVVSSLLWRPLEITMLEPVVFLIDIYIALVYSIMYLIFESVPIVYAGIHHFTLVEMGATYVSTIIGIIIGGAIYLPTVYYKFTKKLLAGQNVTPEVFLPPAIFGAICMPIGVFIFGWTSSPDINWFVPLIGMALFAVGAFIIFQTLFNYMAVSFKVEYLASVFSSNAFFRSVSAGAFPLFGRALYNNLSIDKFPVGWGSSILGFISLGMIAIPVFFYLNGPKLRARSKYAY.

A disordered region spans residues 46 to 70 (VLNSSDKSQSSENKEQTEGDQATIQ). A compositionally biased stretch (polar residues) spans 47 to 56 (LNSSDKSQSS). 12 helical membrane passes run 100–120 (AIAA…SAIY), 137–157 (LATL…LFWS), 168–188 (TPLY…TALS), 194–213 (LSVL…STGG), 225–246 (YSIA…GPLI), 262–282 (WSFW…SFSL), 346–362 (IYIA…FESV), 381–399 (YVST…LPTV), 419–439 (LPPA…FGWT), 445–464 (NWFV…FIIF), 477–494 (VEYL…RSVS), and 518–539 (WGSS…FFYL).

It belongs to the major facilitator superfamily. CAR1 family.

It localises to the membrane. Probable transporter. Confers resistance to cycloheximide. The polypeptide is Cycloheximide resistance protein (CYHR) (Candida maltosa (Yeast)).